The chain runs to 495 residues: Aspartyl/glutamyl-tRNA(Asn/Gln) amidotransferase subunit B (495 aa).

This sequence belongs to the GatB/GatE family. GatB subfamily. Heterotrimer of A, B and C subunits.

It carries out the reaction L-glutamyl-tRNA(Gln) + L-glutamine + ATP + H2O = L-glutaminyl-tRNA(Gln) + L-glutamate + ADP + phosphate + H(+). The enzyme catalyses L-aspartyl-tRNA(Asn) + L-glutamine + ATP + H2O = L-asparaginyl-tRNA(Asn) + L-glutamate + ADP + phosphate + 2 H(+). Its function is as follows. Allows the formation of correctly charged Asn-tRNA(Asn) or Gln-tRNA(Gln) through the transamidation of misacylated Asp-tRNA(Asn) or Glu-tRNA(Gln) in organisms which lack either or both of asparaginyl-tRNA or glutaminyl-tRNA synthetases. The reaction takes place in the presence of glutamine and ATP through an activated phospho-Asp-tRNA(Asn) or phospho-Glu-tRNA(Gln). The sequence is that of Aspartyl/glutamyl-tRNA(Asn/Gln) amidotransferase subunit B from Beijerinckia indica subsp. indica (strain ATCC 9039 / DSM 1715 / NCIMB 8712).